The primary structure comprises 114 residues: Large ribosomal subunit protein uL22 (114 aa).

Belongs to the universal ribosomal protein uL22 family. In terms of assembly, part of the 50S ribosomal subunit.

Functionally, this protein binds specifically to 23S rRNA; its binding is stimulated by other ribosomal proteins, e.g. L4, L17, and L20. It is important during the early stages of 50S assembly. It makes multiple contacts with different domains of the 23S rRNA in the assembled 50S subunit and ribosome. The globular domain of the protein is located near the polypeptide exit tunnel on the outside of the subunit, while an extended beta-hairpin is found that lines the wall of the exit tunnel in the center of the 70S ribosome. This chain is Large ribosomal subunit protein uL22, found in Ehrlichia ruminantium (strain Gardel).